A 614-amino-acid chain; its full sequence is Vitamin B12 transporter BtuB (614 aa).

The first 20 residues, 1–20, serve as a signal peptide directing secretion; sequence MIKKASLLTACSVTAFSAWA. Positions 26–33 match the TonB box motif; that stretch reads DTLVVTAN. Positions 38-152 constitute a TBDR plug domain; the sequence is PRSTVLAPTT…IGGVVNIITT (115 aa). Cyanocob(III)alamin-binding positions include L83, S85, N92, and 110–111; that span reads VS. In terms of domain architecture, TBDR beta-barrel spans 155-614; the sequence is HPGTEISAGW…EYTLSGSYTF (460 aa). 3 beta stranded membrane-spanning segments follow: residues 158-165, 169-178, and 184-195; these read TEISAGWG, YQNYDVSTQQ, and TRVTLLGDYAHT. The Ca(2+) site is built by D199, Q211, D213, and D215. 2 beta stranded membrane-spanning segments follow: residues 217–227 and 232–248; these read FLSKTLYGALE and DVWS…NRTN. Positions 249 and 250 each coordinate Ca(2+). A251 serves as a coordination point for cyanocob(III)alamin. Position 261 (D261) interacts with Ca(2+). The next 14 beta stranded transmembrane spans lie at 263-277, 279-296, 309-325, 328-337, 353-369, 371-381, 385-400, 403-417, 434-443, 449-458, 473-490, 494-509, 517-529, and 535-550; these read RKLY…LRYN, ELIK…KDYN, TLDE…NNII, HGNIGAGVDW, YDQR…QQVG, FTFEGAGRSDD, FGRH…WEFI, YRFI…KAPN, KSKQWEGAFE, VNWRISGYRN, YYNE…TANF, PLTH…ARNA, RRAK…QLDW, and DWGI…YDKD. Position 309 (T309) interacts with cyanocob(III)alamin. R517 serves as a coordination point for cyanocob(III)alamin. Y551 contributes to the cyanocob(III)alamin binding site. 3 beta stranded membrane-spanning segments follow: residues 558–572, 585–596, and 602–614; these read TVKM…LAVA, IANLFDKDYETV, and AGRE…SYTF. The short motif at 597–614 is the TonB C-terminal box element; that stretch reads YGYQTAGREYTLSGSYTF.

It belongs to the TonB-dependent receptor family. BtuB (TC 1.B.14.3.1) subfamily.

The protein resides in the cell outer membrane. Functionally, involved in the active translocation of vitamin B12 (cyanocobalamin) across the outer membrane to the periplasmic space. It derives its energy for transport by interacting with the trans-periplasmic membrane protein TonB. The polypeptide is Vitamin B12 transporter BtuB (Escherichia coli O6:K15:H31 (strain 536 / UPEC)).